The following is a 357-amino-acid chain: tRNA N6-adenosine threonylcarbamoyltransferase (357 aa).

The Fe cation site is built by His115 and His119. Substrate is bound by residues 137-141 (LASGG), Asp170, Gly183, and Asn281. Asp309 provides a ligand contact to Fe cation.

The protein belongs to the KAE1 / TsaD family. The cofactor is Fe(2+).

It is found in the cytoplasm. It carries out the reaction L-threonylcarbamoyladenylate + adenosine(37) in tRNA = N(6)-L-threonylcarbamoyladenosine(37) in tRNA + AMP + H(+). Required for the formation of a threonylcarbamoyl group on adenosine at position 37 (t(6)A37) in tRNAs that read codons beginning with adenine. Is involved in the transfer of the threonylcarbamoyl moiety of threonylcarbamoyl-AMP (TC-AMP) to the N6 group of A37, together with TsaE and TsaB. TsaD likely plays a direct catalytic role in this reaction. The polypeptide is tRNA N6-adenosine threonylcarbamoyltransferase (Nitrobacter hamburgensis (strain DSM 10229 / NCIMB 13809 / X14)).